The primary structure comprises 267 residues: 4-hydroxy-tetrahydrodipicolinate reductase (267 aa).

Residue Gly8–Met13 participates in NAD(+) binding. Arg35 contributes to the NADP(+) binding site. Residues Gly98–Thr100 and Ala122–Phe125 each bind NAD(+). His155 (proton donor/acceptor) is an active-site residue. His156 contacts (S)-2,3,4,5-tetrahydrodipicolinate. The active-site Proton donor is Lys159. Position 165 to 166 (Gly165 to Thr166) interacts with (S)-2,3,4,5-tetrahydrodipicolinate.

The protein belongs to the DapB family.

It is found in the cytoplasm. The enzyme catalyses (S)-2,3,4,5-tetrahydrodipicolinate + NAD(+) + H2O = (2S,4S)-4-hydroxy-2,3,4,5-tetrahydrodipicolinate + NADH + H(+). It catalyses the reaction (S)-2,3,4,5-tetrahydrodipicolinate + NADP(+) + H2O = (2S,4S)-4-hydroxy-2,3,4,5-tetrahydrodipicolinate + NADPH + H(+). The protein operates within amino-acid biosynthesis; L-lysine biosynthesis via DAP pathway; (S)-tetrahydrodipicolinate from L-aspartate: step 4/4. Its function is as follows. Catalyzes the conversion of 4-hydroxy-tetrahydrodipicolinate (HTPA) to tetrahydrodipicolinate. This chain is 4-hydroxy-tetrahydrodipicolinate reductase, found in Azotobacter vinelandii (strain DJ / ATCC BAA-1303).